Consider the following 145-residue polypeptide: 3-hydroxyacyl-[acyl-carrier-protein] dehydratase FabZ (145 aa).

Histidine 49 is an active-site residue.

The protein belongs to the thioester dehydratase family. FabZ subfamily.

It is found in the cytoplasm. The enzyme catalyses a (3R)-hydroxyacyl-[ACP] = a (2E)-enoyl-[ACP] + H2O. Functionally, involved in unsaturated fatty acids biosynthesis. Catalyzes the dehydration of short chain beta-hydroxyacyl-ACPs and long chain saturated and unsaturated beta-hydroxyacyl-ACPs. The chain is 3-hydroxyacyl-[acyl-carrier-protein] dehydratase FabZ from Ehrlichia ruminantium (strain Gardel).